Consider the following 384-residue polypeptide: Chaperone protein DnaJ (384 aa).

The 66-residue stretch at 6–71 (DYYEVLGISK…TKRKTYDQFG (66 aa)) folds into the J domain. The CR-type zinc finger occupies 141–223 (GKKMSIKVNR…CHGTGNTRKV (83 aa)). Zn(2+) is bound by residues cysteine 154, cysteine 157, cysteine 171, cysteine 174, cysteine 197, cysteine 200, cysteine 211, and cysteine 214. CXXCXGXG motif repeat units lie at residues 154–161 (CEECNGTG), 171–178 (CSTCNGTG), 197–204 (CSACNGTG), and 211–218 (CSKCHGTG).

This sequence belongs to the DnaJ family. Homodimer. Zn(2+) is required as a cofactor.

Its subcellular location is the cytoplasm. In terms of biological role, participates actively in the response to hyperosmotic and heat shock by preventing the aggregation of stress-denatured proteins and by disaggregating proteins, also in an autonomous, DnaK-independent fashion. Unfolded proteins bind initially to DnaJ; upon interaction with the DnaJ-bound protein, DnaK hydrolyzes its bound ATP, resulting in the formation of a stable complex. GrpE releases ADP from DnaK; ATP binding to DnaK triggers the release of the substrate protein, thus completing the reaction cycle. Several rounds of ATP-dependent interactions between DnaJ, DnaK and GrpE are required for fully efficient folding. Also involved, together with DnaK and GrpE, in the DNA replication of plasmids through activation of initiation proteins. The chain is Chaperone protein DnaJ from Clostridioides difficile (strain 630) (Peptoclostridium difficile).